The primary structure comprises 625 residues: Prothrombin (625 aa).

An N-terminal signal peptide occupies residues 1-24 (MARVRGPRLPGCLALAALFSLVHS). A propeptide spanning residues 25–43 (QHVFLAHQQASSLLQRARR) is cleaved from the precursor. In terms of domain architecture, Gla spans 44-90 (ANKGFLEEVRKGNLERECLEEPCSREEAFEALESLSATDAFWAKYTA). 10 positions are modified to 4-carboxyglutamate: E50, E51, E58, E60, E63, E64, E69, E70, E73, and E76. C61 and C66 are disulfide-bonded. Disulfide bonds link C91-C104, C109-C187, C130-C170, C158-C182, C214-C292, C235-C275, C263-C287, C339-C485, C394-C410, C539-C553, and C567-C597. Kringle domains lie at 109-187 (CAEG…VPVC) and 214-292 (CVPD…LNYC). 2 N-linked (GlcNAc...) asparagine glycosylation sites follow: N120 and N144. The region spanning 367-621 (IVEGQDAEVG…LKKWIQKVID (255 aa)) is the Peptidase S1 domain. The active-site Charge relay system is H409. A glycan (N-linked (GlcNAc...) asparagine) is linked at N419. D465 functions as the Charge relay system in the catalytic mechanism. Residues 554–576 (AGYKPGEGKRGDACEGDSGGPFV) form a high affinity receptor-binding region which is also known as the TP508 peptide region. S571 acts as the Charge relay system in catalysis.

It belongs to the peptidase S1 family. In terms of assembly, heterodimer (named alpha-thrombin) of a light and a heavy chain; disulfide-linked. Forms a heterodimer with SERPINA5. In plasma, interacts (via N-terminus) with alpha-1-microglobulin; this interaction does not prevent the activation of prothrombin to thrombin. In terms of processing, the gamma-carboxyglutamyl residues, which bind calcium ions, result from the carboxylation of glutamyl residues by a microsomal enzyme, the vitamin K-dependent carboxylase. The modified residues are necessary for the calcium-dependent interaction with a negatively charged phospholipid surface, which is essential for the conversion of prothrombin to thrombin. Post-translationally, in the penultimate step of the coagulation cascade, prothrombin is converted to thrombin by the prothrombinase complex composed of factor Xa (F10), cofactor Va (F5), and phospholipids. This activation requires factor Xa-catalyzed sequential cleavage at 2 sites, Arg-317 and Arg-366, along 2 possible pathways. In the first pathway, the first cleavage occurs at Arg-317, leading to the formation of the inactive intermediate prethrombin-2. This pathway preferentially occurs on platelets and in the absence of cofactor Va. In the second pathway, the first cleavage occurs at Arg-366, which separates protease domain into 2 chains that remain connected through a disulfide bond and generates the active intermediate meizothrombin. The presence of cofactor Va directs activation along the meizothrombin pathway and greatly accelerates the rate of cleavage at Arg-366, but has a smaller effect on the cleavage of meizothrombin at Arg-317. Meizothrombin accumulates as an intermediate when prothrombinase is assembled on the membrane of red blood cells. Expressed by the liver and secreted in plasma.

The protein localises to the secreted. It is found in the extracellular space. It catalyses the reaction Selective cleavage of Arg-|-Gly bonds in fibrinogen to form fibrin and release fibrinopeptides A and B.. With respect to regulation, activity is promoted in the presence of negatively charged surfaces, such as polyphosphate and dextran sulfate. Inhibited by SERPINA5. Its function is as follows. Thrombin, which cleaves bonds after Arg and Lys, converts fibrinogen to fibrin and activates factors V, VII, VIII, XIII, and, in complex with thrombomodulin, protein C. Functions in blood homeostasis, inflammation and wound healing. Activates coagulation factor XI (F11); activation is promoted by the contact with negatively charged surfaces. Triggers the production of pro-inflammatory cytokines, such as MCP-1/CCL2 and IL8/CXCL8, in endothelial cells. The sequence is that of Prothrombin (F2) from Bos taurus (Bovine).